Here is a 405-residue protein sequence, read N- to C-terminus: Serpin H1 (405 aa).

An N-terminal signal peptide occupies residues 1 to 15 (MQIFLVLALCGLAAA). 2 N-linked (GlcNAc...) asparagine glycosylation sites follow: Asn107 and Asn112. The short motif at 402–405 (RDEL) is the Prevents secretion from ER element.

This sequence belongs to the serpin family.

It is found in the endoplasmic reticulum lumen. In terms of biological role, binds specifically to collagen. Could be involved as a chaperone in the biosynthetic pathway of collagen. The chain is Serpin H1 (SERPINH1) from Gallus gallus (Chicken).